Here is a 355-residue protein sequence, read N- to C-terminus: G protein alpha i subunit (355 aa).

Glycine 2 carries the N-myristoyl glycine lipid modification. Cysteine 3 is lipidated: S-palmitoyl cysteine. One can recognise a G-alpha domain in the interval serine 33–phenylalanine 355. A G1 motif region spans residues lysine 36–threonine 49. GTP is bound by residues glycine 41–serine 48, leucine 176–threonine 182, aspartate 201–glutamine 205, asparagine 270–aspartate 273, and alanine 327. Mg(2+) contacts are provided by serine 48 and threonine 182. The segment at aspartate 174–threonine 182 is G2 motif. The segment at phenylalanine 197–arginine 206 is G3 motif. Residues isoleucine 266–aspartate 273 are G4 motif. The segment at threonine 325 to threonine 330 is G5 motif.

The protein belongs to the G-alpha family. G(i/o/t/z) subfamily. In terms of assembly, g proteins are composed of 3 units; alpha, beta and gamma. The alpha chain contains the guanine nucleotide binding site. Interacts (via GDP- or GTP-bound forms) with loco (via GoLoco and RGS domains). Interacts with raps/pins.

It is found in the cell membrane. The protein localises to the apical cell membrane. Functionally, guanine nucleotide-binding proteins (G proteins) are involved as modulators or transducers in various transmembrane signaling systems. Plays a role in glial cell differentiation during embryogenesis; loco, Galphao and the G-protein coupled receptor, moody, are required in the surface glia to achieve effective insulation of the nerve cord. The sequence is that of G protein alpha i subunit (Galphai) from Drosophila melanogaster (Fruit fly).